We begin with the raw amino-acid sequence, 677 residues long: Galactocerebrosidase (677 aa).

A signal peptide spans 1-33 (MGTVPAGSRRAPGCGEGMFILCLALLLAPGAPA). Substrate contacts are provided by Thr-101, Trp-143, and Asn-189. The active-site Proton donor/acceptor is the Glu-190. Glu-265 (nucleophile) is an active-site residue. Cys-278 and Cys-385 are oxidised to a cystine. 3 N-linked (GlcNAc...) asparagine glycosylation sites follow: Asn-291, Asn-370, and Asn-381. Arg-387 contacts substrate. 7 N-linked (GlcNAc...) asparagine glycosylation sites follow: Asn-394, Asn-399, Asn-424, Asn-441, Asn-509, Asn-549, and Asn-630.

The protein belongs to the glycosyl hydrolase 59 family.

It is found in the lysosome. It catalyses the reaction a beta-D-galactosyl-(1&lt;-&gt;1')-N-acylsphing-4-enine + H2O = an N-acylsphing-4-enine + D-galactose. The enzyme catalyses beta-D-galactosyl-(1&lt;-&gt;1)-sphing-4-enine + H2O = sphing-4-enine + D-galactose. The catalysed reaction is a D-galactosylceramide + H2O = an N-acyl-sphingoid base + D-galactose. In terms of biological role, hydrolyzes the galactose ester bonds of glycolipids such as galactosylceramide and galactosylsphingosine. The sequence is that of Galactocerebrosidase from Xenopus laevis (African clawed frog).